A 170-amino-acid chain; its full sequence is Large ribosomal subunit protein uL22z (170 aa).

This sequence belongs to the universal ribosomal protein uL22 family.

This is Large ribosomal subunit protein uL22z from Hordeum vulgare (Barley).